The chain runs to 221 residues: Putative 5'(3')-deoxyribonucleotidase R824 (221 aa).

Mg(2+) is bound by residues Asp-16 and Asp-18. Asp-18 functions as the Nucleophile in the catalytic mechanism. Positions 18, 103, and 138 each coordinate phosphate. Asp-149 contacts Mg(2+).

It belongs to the 5'(3')-deoxyribonucleotidase family. Requires Mg(2+) as cofactor.

Its function is as follows. Dephosphorylates the 5' and 2'(3')-phosphates of deoxyribonucleotides. This chain is Putative 5'(3')-deoxyribonucleotidase R824, found in Acanthamoeba polyphaga mimivirus (APMV).